The following is a 320-amino-acid chain: ATP-dependent 6-phosphofructokinase (320 aa).

Gly-12 serves as a coordination point for ATP. Residues 22–26 and 55–60 each bind ADP; these read RGVVR and RYSVSD. ATP-binding positions include 73–74 and 103–106; these read RF and GDGS. Residue Asp-104 participates in Mg(2+) binding. 126–128 is a binding site for substrate; sequence TID. The Proton acceptor role is filled by Asp-128. Arg-155 is an ADP binding site. Residues Arg-163 and 170 to 172 each bind substrate; that span reads MGR. ADP-binding positions include 186-188, Lys-212, and 214-216; these read GCE and KKH. Residues Glu-223, Arg-244, and 250–253 each bind substrate; that span reads HIQR.

This sequence belongs to the phosphofructokinase type A (PFKA) family. ATP-dependent PFK group I subfamily. Prokaryotic clade 'B1' sub-subfamily. Homotetramer. The cofactor is Mg(2+).

Its subcellular location is the cytoplasm. It catalyses the reaction beta-D-fructose 6-phosphate + ATP = beta-D-fructose 1,6-bisphosphate + ADP + H(+). It functions in the pathway carbohydrate degradation; glycolysis; D-glyceraldehyde 3-phosphate and glycerone phosphate from D-glucose: step 3/4. Its activity is regulated as follows. Allosterically activated by ADP and other diphosphonucleosides, and allosterically inhibited by phosphoenolpyruvate. Catalyzes the phosphorylation of D-fructose 6-phosphate to fructose 1,6-bisphosphate by ATP, the first committing step of glycolysis. The polypeptide is ATP-dependent 6-phosphofructokinase (Salmonella agona (strain SL483)).